The primary structure comprises 382 residues: D-galactonate dehydratase (382 aa).

Position 183 (D183) interacts with Mg(2+). H185 serves as the catalytic Proton donor. Mg(2+) is bound by residues E209 and E235. H285 (proton acceptor) is an active-site residue.

The protein belongs to the mandelate racemase/muconate lactonizing enzyme family. GalD subfamily. It depends on Mg(2+) as a cofactor.

It carries out the reaction D-galactonate = 2-dehydro-3-deoxy-D-galactonate + H2O. It functions in the pathway carbohydrate acid metabolism; D-galactonate degradation; D-glyceraldehyde 3-phosphate and pyruvate from D-galactonate: step 1/3. Its function is as follows. Catalyzes the dehydration of D-galactonate to 2-keto-3-deoxy-D-galactonate. The protein is D-galactonate dehydratase of Salmonella gallinarum (strain 287/91 / NCTC 13346).